A 562-amino-acid chain; its full sequence is Putative transport protein YPA_0617 (562 aa).

The next 6 helical transmembrane spans lie at 8–28 (LLNGNYILLLFVVLALGLCLG), 37–57 (LGNAIGVLVVSLLLGQQHFAI), 66–86 (FMLFIFCVGVEAGPNFFSIFF), 94–114 (MLALVMVGSAMILALGLGKLF), 118–138 (IGLTAGMLAGSMTSTPVLVGA), and 158–178 (NLSLGYALTYLIGLVSLILGA). 2 RCK C-terminal domains span residues 202 to 288 (LDTD…SFRN) and 290 to 373 (KEVF…KIGF). A run of 5 helical transmembrane segments spans residues 383 to 403 (LLAFCSFFILGLMIGLITFQF), 406 to 426 (FSFGIGNAAGLLLAGIMLGFL), 447 to 467 (FGLMVFMAGVGLSAGGGINSS), 475 to 495 (MLISGLIVSLVPVVICFVFGA), and 541 to 561 (IANVLLTLAGSLIVILWPGIL).

This sequence belongs to the AAE transporter (TC 2.A.81) family. YbjL subfamily.

The protein localises to the cell membrane. The sequence is that of Putative transport protein YPA_0617 from Yersinia pestis bv. Antiqua (strain Antiqua).